We begin with the raw amino-acid sequence, 440 residues long: C4-dicarboxylate transport protein (440 aa).

A run of 8 helical transmembrane segments spans residues 8–28 (LYLQVLLAVVLGALVGHLFPA), 40–60 (FIKLVKMLIAPIVFATVVTGI), 74–94 (LKGLLYFEVLTTVALAIGLVV), 147–167 (GDILQVLLFSVLFGAALAALK), 187–207 (IVGFVMRLAPVGAFGAMAFTV), 221–241 (LIACFYATSALFVVLMLGLVL), 288–308 (VVGLVVPMGYSFNLDGTSIYL), and 354–374 (AATLSAVGNIPVAGLALLLGV). The segment at 419 to 440 (EEVEPANEPEPPAVPAGAGLHG) is disordered.

It belongs to the dicarboxylate/amino acid:cation symporter (DAACS) (TC 2.A.23) family.

It localises to the cell inner membrane. Functionally, responsible for the transport of dicarboxylates such as succinate, fumarate, and malate from the periplasm across the membrane. The chain is C4-dicarboxylate transport protein from Anaeromyxobacter dehalogenans (strain 2CP-1 / ATCC BAA-258).